The chain runs to 86 residues: Toxin CngtIV (86 aa).

Positions 1–19 (MNSLLIITACLVLIGTVWA) are cleaved as a signal peptide. Residues 20-84 (KDGYLVDVKG…TWPLPNKRCG (65 aa)) enclose the LCN-type CS-alpha/beta domain. 4 disulfides stabilise this stretch: cysteine 30-cysteine 83, cysteine 34-cysteine 59, cysteine 43-cysteine 64, and cysteine 47-cysteine 66.

Belongs to the long (4 C-C) scorpion toxin superfamily. Sodium channel inhibitor family. Beta subfamily. In terms of tissue distribution, expressed by the venom gland.

Its subcellular location is the secreted. In terms of biological role, beta toxins bind voltage-independently at site-4 of sodium channels (Nav) and shift the voltage of activation toward more negative potentials thereby affecting sodium channel activation and promoting spontaneous and repetitive firing. In Centruroides noxius (Mexican scorpion), this protein is Toxin CngtIV.